The chain runs to 285 residues: Tetraspanin-3 (285 aa).

Topologically, residues 1-6 (MRTSNH) are cytoplasmic. A helical membrane pass occupies residues 7–27 (LIGLVNFLTFLLSIPILGGGI). Residues 28–43 (WLSSRANSTDCLRFLQ) lie on the Extracellular side of the membrane. N-linked (GlcNAc...) asparagine glycosylation is present at Asn-34. The helical transmembrane segment at 44-64 (WPLIVIGISIMVVSLAGFAGA) threads the bilayer. Residues 65 to 71 (CYRNKFL) lie on the Cytoplasmic side of the membrane. A helical membrane pass occupies residues 72-92 (MWLYLVVMLLIIAALIGFIIF). Topologically, residues 93–235 (AYAVTDKGSG…LGSLKKSWRK (143 aa)) are extracellular. The N-linked (GlcNAc...) asparagine glycan is linked to Asn-187. A helical membrane pass occupies residues 236-256 (VSVINIVVLIILVIFYVIAYA). Residues 257–285 (AYRNVKRIDNDEPAGEARMTKSHPSHFHL) lie on the Cytoplasmic side of the membrane.

Belongs to the tetraspanin (TM4SF) family.

The protein localises to the cell membrane. Functionally, may be involved in the regulation of cell differentiation. The protein is Tetraspanin-3 (TET3) of Arabidopsis thaliana (Mouse-ear cress).